The sequence spans 708 residues: Nucleolar protein 11-like (708 aa).

It localises to the nucleus. It is found in the nucleolus. Functionally, ribosome biogenesis factor. May be required for both optimal rDNA transcription and pre-rRNA processing. This Danio rerio (Zebrafish) protein is Nucleolar protein 11-like (nol11).